Reading from the N-terminus, the 718-residue chain is Acetolactate synthase, mitochondrial (718 aa).

Disordered regions lie at residues 1-53 (MLTR…YDTP) and 75-99 (QSSA…QAAP). Polar residues predominate over residues 32–45 (RYSNNIHTSSTQNA). Low complexity predominate over residues 76–99 (SSASTAAASPAVRPQPAQHFQAAP). Residue Glu-173 participates in thiamine diphosphate binding. Position 275 (Arg-275) interacts with FAD. The segment at 301 to 326 (VQPGHSPYLPSNPLNPSSQPSDPLPG) is disordered. Low complexity predominate over residues 306-325 (SPYLPSNPLNPSSQPSDPLP). Residues 397-418 (HGSA…LGVR) and 449-468 (EIQP…VLGD) each bind FAD. A thiamine pyrophosphate binding region spans residues 541–621 (QHQMWACQYY…VKVLLFNNEF (81 aa)). Mg(2+) contacts are provided by Asp-592 and Asn-619.

It belongs to the TPP enzyme family. Requires Mg(2+) as cofactor. It depends on thiamine diphosphate as a cofactor.

It is found in the mitochondrion. The enzyme catalyses 2 pyruvate + H(+) = (2S)-2-acetolactate + CO2. It participates in amino-acid biosynthesis; L-isoleucine biosynthesis; L-isoleucine from 2-oxobutanoate: step 1/4. The protein operates within amino-acid biosynthesis; L-valine biosynthesis; L-valine from pyruvate: step 1/4. The chain is Acetolactate synthase, mitochondrial (ILV2) from Cryptococcus neoformans var. grubii serotype A (strain H99 / ATCC 208821 / CBS 10515 / FGSC 9487) (Filobasidiella neoformans var. grubii).